Consider the following 114-residue polypeptide: Large ribosomal subunit protein uL22 (114 aa).

Belongs to the universal ribosomal protein uL22 family. As to quaternary structure, part of the 50S ribosomal subunit.

Functionally, this protein binds specifically to 23S rRNA; its binding is stimulated by other ribosomal proteins, e.g. L4, L17, and L20. It is important during the early stages of 50S assembly. It makes multiple contacts with different domains of the 23S rRNA in the assembled 50S subunit and ribosome. Its function is as follows. The globular domain of the protein is located near the polypeptide exit tunnel on the outside of the subunit, while an extended beta-hairpin is found that lines the wall of the exit tunnel in the center of the 70S ribosome. This is Large ribosomal subunit protein uL22 from Streptococcus sanguinis (strain SK36).